The following is a 241-amino-acid chain: Glucosamine-6-phosphate deaminase (241 aa).

The Proton acceptor; for enolization step role is filled by D67. The For ring-opening step role is filled by N136. Catalysis depends on H138, which acts as the Proton acceptor; for ring-opening step. E143 serves as the catalytic For ring-opening step.

Belongs to the glucosamine/galactosamine-6-phosphate isomerase family. NagB subfamily.

It carries out the reaction alpha-D-glucosamine 6-phosphate + H2O = beta-D-fructose 6-phosphate + NH4(+). The protein operates within amino-sugar metabolism; N-acetylneuraminate degradation; D-fructose 6-phosphate from N-acetylneuraminate: step 5/5. Catalyzes the reversible isomerization-deamination of glucosamine 6-phosphate (GlcN6P) to form fructose 6-phosphate (Fru6P) and ammonium ion. In Clostridium tetani (strain Massachusetts / E88), this protein is Glucosamine-6-phosphate deaminase.